The chain runs to 115 residues: Ribonuclease P protein component (115 aa).

Belongs to the RnpA family. As to quaternary structure, consists of a catalytic RNA component (M1 or rnpB) and a protein subunit.

The catalysed reaction is Endonucleolytic cleavage of RNA, removing 5'-extranucleotides from tRNA precursor.. Its function is as follows. RNaseP catalyzes the removal of the 5'-leader sequence from pre-tRNA to produce the mature 5'-terminus. It can also cleave other RNA substrates such as 4.5S RNA. The protein component plays an auxiliary but essential role in vivo by binding to the 5'-leader sequence and broadening the substrate specificity of the ribozyme. This is Ribonuclease P protein component from Bacillus cereus (strain B4264).